The following is a 204-amino-acid chain: Probable nicotinate-nucleotide adenylyltransferase (204 aa).

Belongs to the NadD family.

It catalyses the reaction nicotinate beta-D-ribonucleotide + ATP + H(+) = deamido-NAD(+) + diphosphate. It participates in cofactor biosynthesis; NAD(+) biosynthesis; deamido-NAD(+) from nicotinate D-ribonucleotide: step 1/1. Catalyzes the reversible adenylation of nicotinate mononucleotide (NaMN) to nicotinic acid adenine dinucleotide (NaAD). In Mycobacterium sp. (strain JLS), this protein is Probable nicotinate-nucleotide adenylyltransferase.